The primary structure comprises 292 residues: Elongation factor Ts (292 aa).

Positions 79-82 are involved in Mg(2+) ion dislocation from EF-Tu; that stretch reads TDFV.

It belongs to the EF-Ts family.

It is found in the cytoplasm. Its function is as follows. Associates with the EF-Tu.GDP complex and induces the exchange of GDP to GTP. It remains bound to the aminoacyl-tRNA.EF-Tu.GTP complex up to the GTP hydrolysis stage on the ribosome. The polypeptide is Elongation factor Ts (Xylella fastidiosa (strain Temecula1 / ATCC 700964)).